Consider the following 236-residue polypeptide: Phosphoribosylaminoimidazole-succinocarboxamide synthase (236 aa).

It belongs to the SAICAR synthetase family.

It catalyses the reaction 5-amino-1-(5-phospho-D-ribosyl)imidazole-4-carboxylate + L-aspartate + ATP = (2S)-2-[5-amino-1-(5-phospho-beta-D-ribosyl)imidazole-4-carboxamido]succinate + ADP + phosphate + 2 H(+). Its pathway is purine metabolism; IMP biosynthesis via de novo pathway; 5-amino-1-(5-phospho-D-ribosyl)imidazole-4-carboxamide from 5-amino-1-(5-phospho-D-ribosyl)imidazole-4-carboxylate: step 1/2. This Campylobacter curvus (strain 525.92) protein is Phosphoribosylaminoimidazole-succinocarboxamide synthase.